The primary structure comprises 248 residues: Large ribosomal subunit protein uL1 (248 aa).

The protein belongs to the universal ribosomal protein uL1 family. In terms of assembly, part of the 50S ribosomal subunit.

Binds directly to 23S rRNA. The L1 stalk is quite mobile in the ribosome, and is involved in E site tRNA release. Its function is as follows. Protein L1 is also a translational repressor protein, it controls the translation of the L11 operon by binding to its mRNA. The protein is Large ribosomal subunit protein uL1 of Orientia tsutsugamushi (strain Boryong) (Rickettsia tsutsugamushi).